Reading from the N-terminus, the 138-residue chain is Acidic phospholipase A2 RV-7 (138 aa).

A signal peptide spans 1-16 (MRTLWIVAVCLIGVEG). 7 disulfide bridges follow: cysteine 42–cysteine 131, cysteine 44–cysteine 60, cysteine 59–cysteine 111, cysteine 65–cysteine 138, cysteine 66–cysteine 104, cysteine 73–cysteine 97, and cysteine 91–cysteine 102. The Ca(2+) site is built by tyrosine 43, glycine 45, and glycine 47. Residue histidine 63 is part of the active site. Aspartate 64 is a Ca(2+) binding site. Aspartate 105 is a catalytic residue.

Belongs to the phospholipase A2 family. Group II subfamily. D49 sub-subfamily. Heterodimer of a weakly toxic basic protein having phospholipase A2 activity (RV-4) and a non-toxic acidic protein which inhibits its enzymatic activity but potentiates its lethal potency and neurotoxicity (RV-7). Ca(2+) serves as cofactor. Expressed by the venom gland.

The protein resides in the secreted. The catalysed reaction is a 1,2-diacyl-sn-glycero-3-phosphocholine + H2O = a 1-acyl-sn-glycero-3-phosphocholine + a fatty acid + H(+). In terms of biological role, heterodimer: RV-4/RV-7 targets the presynaptic sites of the neuromuscular junction. Its function is as follows. Monomer: snake venom phospholipase A2 (PLA2) RV-7 that has low enzymatic activity and is not toxic. It inhibits the enzymatic activity of RV-4 in vitro but potentiates its lethal potency and neurotoxicity. It may facilitate the specific binding of RV-4 to its presynaptic binding sites, probably by acting as a chaperone, minimizing distraction and destruction of RV-4 en route to the site of action by reducing non-specific binding to muscle and other organs. PLA2 catalyzes the calcium-dependent hydrolysis of the 2-acyl groups in 3-sn-phosphoglycerides. This is Acidic phospholipase A2 RV-7 from Daboia siamensis (Eastern Russel's viper).